A 714-amino-acid chain; its full sequence is Fumarate reductase flavoprotein subunit (714 aa).

Residues 13 to 16 (GGLA), 42 to 44 (SHS), and 49 to 50 (GG) contribute to the FAD site. The residue at position 43 (His43) is a Tele-8alpha-FAD histidine. Catalysis depends on residues His257 and Arg273. Residues Glu420 and 436 to 437 (SV) each bind FAD.

The protein belongs to the FAD-dependent oxidoreductase 2 family. FRD/SDH subfamily. As to quaternary structure, part of an enzyme complex containing three subunits: a flavoprotein (frdA), an iron-sulfur protein (frdB), and diheme cytochrome b (frdC). Requires FAD as cofactor.

The protein localises to the cell inner membrane. It catalyses the reaction a quinone + succinate = fumarate + a quinol. Functionally, the fumarate reductase enzyme complex is required for fumarate respiration. This chain is Fumarate reductase flavoprotein subunit (frdA), found in Helicobacter pylori (strain ATCC 700392 / 26695) (Campylobacter pylori).